The primary structure comprises 744 residues: MANESKCPFHQTAGGGTSNRDWWPDQLNLKILHQHSRKSDPMDPDFDYAKAFKSLDFQALKKDLTALMTDSQDWWPADFGHYGPLFIRMAWHSAGTYRIGDGRGGAGSGQQRFAPLNSWPDNVSLDKARRLLWPIKQKYGNKISWADLIVLTGNVALESMGFKTFGFSGGRADVWEPDEDVYWGSEKVWLGGDTRYGKAEAPGKGDLVAEPAKRPQEQGRNLAGERNLENPLAAVQMGLIYVNPEGPEGNPDPVASGKDIRDTFGRMAMNDEETVALIAGGHAFGKTHGAGPADNVGAEPEAAGLEQQGFGWHNTFGTGKGGDTITSGLEVTWTSTPTKWSNEYLNNLFNFEWELTKSPAGAHQWRPKDGKGANTVPDAHDTTKRHAPSMLTSDLALRFDPIYEPIARRFKDNPDQLADAFARAWYKLIHRDMGPLARYLGPEMPNEELLWQDPLPKAGPQPSEADIAAHKAKVLASGLSVAELVSTAWASASTFRGSDKRGGANGARLRLAPQKDWAANQGLDKVLAALEKIRDEGGNKISLADLIVLAGSAAVEKAAKDAGHAISVPFHPGRVDASQAQTDVESFAVLEPLADGFRNFSKARYSVKAEKLLLDKAQLLTLTAPELTVLVGGLRVLGANHGGSKEGVFTDKPGVLTNDFFRNLLDMGVEWKPTSADNEHFEGRDRKTGAVKWTGSRVDLVFGSHAQLRALSEVYGSGDAAAKFVKDFVAAWVKVMELDRFDLK.

The tract at residues 1–21 (MANESKCPFHQTAGGGTSNRD) is disordered. A cross-link (tryptophyl-tyrosyl-methioninium (Trp-Tyr) (with M-267)) is located at residues 91 to 241 (WHSAGTYRIG…LAAVQMGLIY (151 aa)). The active-site Proton acceptor is the histidine 92. The tryptophyl-tyrosyl-methioninium (Tyr-Met) (with W-91) cross-link spans 241 to 267 (YVNPEGPEGNPDPVASGKDIRDTFGRM). Histidine 282 serves as a coordination point for heme b. The tract at residues 361–387 (GAHQWRPKDGKGANTVPDAHDTTKRHA) is disordered.

This sequence belongs to the peroxidase family. Peroxidase/catalase subfamily. As to quaternary structure, homodimer or homotetramer. The cofactor is heme b. Formation of the three residue Trp-Tyr-Met cross-link is important for the catalase, but not the peroxidase activity of the enzyme.

It carries out the reaction H2O2 + AH2 = A + 2 H2O. The catalysed reaction is 2 H2O2 = O2 + 2 H2O. Functionally, bifunctional enzyme with both catalase and broad-spectrum peroxidase activity. This Pseudomonas entomophila (strain L48) protein is Catalase-peroxidase.